The primary structure comprises 185 residues: Ribosome-recycling factor (185 aa).

This sequence belongs to the RRF family.

The protein resides in the cytoplasm. Functionally, responsible for the release of ribosomes from messenger RNA at the termination of protein biosynthesis. May increase the efficiency of translation by recycling ribosomes from one round of translation to another. The polypeptide is Ribosome-recycling factor (Haemophilus ducreyi (strain 35000HP / ATCC 700724)).